We begin with the raw amino-acid sequence, 863 residues long: Dipeptidyl peptidase 9 (863 aa).

Residues Met1–Pro20 are disordered. Ala2 carries the post-translational modification N-acetylalanine. Catalysis depends on charge relay system residues Ser730, Asp808, and His840. Ser730 is a Val-boroPro binding site.

It belongs to the peptidase S9B family. DPPIV subfamily. Homodimer. Forms a ternary complex with NLRP1, composed of a DPP9 homodimer, one full-length NLRP1 protein, and one cleaved C-terminus of NLRP1 (NACHT, LRR and PYD domains-containing protein 1, C-terminus). Forms a ternary complex with CARD8, composed of a DPP9 homodimer, one full-length NLRP1 protein, and one cleaved C-terminus of CARD8 (Caspase recruitment domain-containing protein 8, C-terminus). In the ternary complex, only one subunit of the DPP9 homodimer is bound to NLRP1 or CARD8. Ubiquitously expressed, with highest levels in liver, heart and muscle, and lowest levels in brain.

It localises to the cytoplasm. It is found in the cytosol. Its subcellular location is the nucleus. It catalyses the reaction Release of an N-terminal dipeptide, Xaa-Yaa-|-Zaa-, from a polypeptide, preferentially when Yaa is Pro, provided Zaa is neither Pro nor hydroxyproline.. Its activity is regulated as follows. Inhibited by the serine proteinase inhibitor 4-(2-aminoethyl)benzenesulphonyl fluoride (AEBSF), and by di-isopropylfluorophosphate. Inhibited by Val-boroPro (Talabostat, PT-100), a non-selective inhibitor, which triggers pyroptosis in monocytes and macrophages. Val-boroPro inhibits activity by binding to the active site, mimicking a substrate-bound state, thereby displacing the C-terminal fragment of NLRP1, leading to activation of the NLRP1 inflammasome. In contrast, Val-boroPro does not directly displaces CARD8: it acts by promoting degradation of the N-terminal part of CARD8, leading to indirect disruption of the ternary complex. Chemical inhibition of DPP9 by Val-boroPro in HIV-1-infected cells activates the CARD8 inflammasome, triggering cell death, offering a promising strategy for the elimination of HIV-1 reservoirs in people living with HIV-1. Dipeptidyl peptidase that cleaves off N-terminal dipeptides from proteins having a Pro or Ala residue at position 2. Acts as a key inhibitor of caspase-1-dependent monocyte and macrophage pyroptosis in resting cells by preventing activation of NLRP1 and CARD8. Sequesters the cleaved C-terminal part of NLRP1 and CARD8, which respectively constitute the active part of the NLRP1 and CARD8 inflammasomes, in a ternary complex, thereby preventing their oligomerization and activation. The dipeptidyl peptidase activity is required to suppress NLRP1 and CARD8; however, neither NLRP1 nor CARD8 are bona fide substrates of DPP9, suggesting the existence of substrate(s) required for NLRP1 and CARD8 inhibition. This is Dipeptidyl peptidase 9 from Homo sapiens (Human).